Here is a 193-residue protein sequence, read N- to C-terminus: Fe/S biogenesis protein NfuA (193 aa).

Residues C150 and C153 each coordinate [4Fe-4S] cluster.

Belongs to the NfuA family. In terms of assembly, homodimer. Requires [4Fe-4S] cluster as cofactor.

Involved in iron-sulfur cluster biogenesis. Binds a 4Fe-4S cluster, can transfer this cluster to apoproteins, and thereby intervenes in the maturation of Fe/S proteins. Could also act as a scaffold/chaperone for damaged Fe/S proteins. The sequence is that of Fe/S biogenesis protein NfuA from Histophilus somni (strain 129Pt) (Haemophilus somnus).